The sequence spans 142 residues: Hemoglobin subunit alpha-1 (142 aa).

Positions 2-142 (LLSADDKKHI…VSSVLTSKYR (141 aa)) constitute a Globin domain. His-59 is an O2 binding site. His-88 lines the heme b pocket.

The protein belongs to the globin family. Heterotetramer of two alpha chains and two beta chains. In terms of tissue distribution, red blood cells.

Its function is as follows. Involved in oxygen transport from the lung to the various peripheral tissues. The protein is Hemoglobin subunit alpha-1 (hba1) of Xenopus borealis (Kenyan clawed frog).